The sequence spans 266 residues: Hydroxyethylthiazole kinase (266 aa).

Methionine 43 contributes to the substrate binding site. Residues arginine 119 and threonine 166 each coordinate ATP. Glycine 193 contributes to the substrate binding site.

Belongs to the Thz kinase family. The cofactor is Mg(2+).

It catalyses the reaction 5-(2-hydroxyethyl)-4-methylthiazole + ATP = 4-methyl-5-(2-phosphooxyethyl)-thiazole + ADP + H(+). It functions in the pathway cofactor biosynthesis; thiamine diphosphate biosynthesis; 4-methyl-5-(2-phosphoethyl)-thiazole from 5-(2-hydroxyethyl)-4-methylthiazole: step 1/1. In terms of biological role, catalyzes the phosphorylation of the hydroxyl group of 4-methyl-5-beta-hydroxyethylthiazole (THZ). In Methanococcus maripaludis (strain C5 / ATCC BAA-1333), this protein is Hydroxyethylthiazole kinase.